The sequence spans 117 residues: Putative membrane protein insertion efficiency factor (117 aa).

A disordered region spans residues 87–117 (RKGGPSAAEPAIEGHIPSSPAAETPSHVQGA).

It belongs to the UPF0161 family.

It is found in the cell membrane. Could be involved in insertion of integral membrane proteins into the membrane. This chain is Putative membrane protein insertion efficiency factor, found in Streptomyces avermitilis (strain ATCC 31267 / DSM 46492 / JCM 5070 / NBRC 14893 / NCIMB 12804 / NRRL 8165 / MA-4680).